The chain runs to 1205 residues: Chromosome partition protein Smc (1205 aa).

ATP is bound at residue 32–39 (PNGSGKSN). Coiled coils occupy residues 169–288 (KHRK…SIQH) and 330–499 (EELE…GLQR). The SMC hinge domain maps to 514–628 (GLFGSIAQLV…VNDLTEAMGL (115 aa)). Coiled-coil stretches lie at residues 661–771 (LEVT…AQET), 802–836 (AVRT…RAQQ), and 979–1033 (DRVT…KDLL).

It belongs to the SMC family. As to quaternary structure, homodimer.

It localises to the cytoplasm. Its function is as follows. Required for chromosome condensation and partitioning. The polypeptide is Chromosome partition protein Smc (Mycobacterium tuberculosis (strain ATCC 25618 / H37Rv)).